Reading from the N-terminus, the 127-residue chain is Small ribosomal subunit protein uS13 (127 aa).

The tract at residues 93–127 (RQGLPVRGQRTRTNGRTRRGRRVTVAGKKKAPAKK) is disordered. The span at 101–127 (QRTRTNGRTRRGRRVTVAGKKKAPAKK) shows a compositional bias: basic residues.

This sequence belongs to the universal ribosomal protein uS13 family. In terms of assembly, part of the 30S ribosomal subunit. Forms a loose heterodimer with protein S19. Forms two bridges to the 50S subunit in the 70S ribosome.

Functionally, located at the top of the head of the 30S subunit, it contacts several helices of the 16S rRNA. In the 70S ribosome it contacts the 23S rRNA (bridge B1a) and protein L5 of the 50S subunit (bridge B1b), connecting the 2 subunits; these bridges are implicated in subunit movement. Contacts the tRNAs in the A and P-sites. The sequence is that of Small ribosomal subunit protein uS13 from Crocosphaera subtropica (strain ATCC 51142 / BH68) (Cyanothece sp. (strain ATCC 51142)).